We begin with the raw amino-acid sequence, 99 residues long: Transcriptional repressor PagR (99 aa).

An HTH arsR-type domain is found at 9–99 (IEYMSLEDDA…GIIKLLNPIQ (91 aa)). The segment at residues 43–62 (NVTQIIQILKLPQSTVSQHL) is a DNA-binding region (H-T-H motif).

In terms of biological role, represses the expression of the pagA and atxA genes. This is Transcriptional repressor PagR (pagR) from Bacillus anthracis.